Consider the following 439-residue polypeptide: sn-glycerol-3-phosphate-binding periplasmic protein UgpB (439 aa).

The signal sequence occupies residues 1 to 25; sequence MFNNSIHKVSICIALTLTFSANAMA. Residues tyrosine 67, glutamate 91, serine 146, serine 272, glycine 309, tyrosine 348, and arginine 399 each contribute to the sn-glycerol 3-phosphate site.

Belongs to the bacterial solute-binding protein 1 family. As to quaternary structure, the complex is composed of two ATP-binding proteins (UgpC), two transmembrane proteins (UgpA and UgpE) and a solute-binding protein (UgpB).

The protein localises to the periplasm. Functionally, part of the ABC transporter complex UgpBAEC involved in sn-glycerol-3-phosphate (G3P) import. Binds G3P. This chain is sn-glycerol-3-phosphate-binding periplasmic protein UgpB (ugpB), found in Yersinia pestis bv. Antiqua (strain Antiqua).